Reading from the N-terminus, the 150-residue chain is Urease accessory protein UreE (150 aa).

The protein belongs to the UreE family.

The protein resides in the cytoplasm. Its function is as follows. Involved in urease metallocenter assembly. Binds nickel. Probably functions as a nickel donor during metallocenter assembly. This chain is Urease accessory protein UreE, found in Staphylococcus aureus (strain MRSA252).